The sequence spans 314 residues: tRNA dimethylallyltransferase (314 aa).

Residue 11–18 coordinates ATP; the sequence is GPTASGKT. Residue 13 to 18 participates in substrate binding; it reads TASGKT. 4 interaction with substrate tRNA regions span residues 36 to 39, 160 to 164, 241 to 246, and 274 to 281; these read DSAL, QRINR, RCVGYR, and KRQITWLR.

This sequence belongs to the IPP transferase family. In terms of assembly, monomer. It depends on Mg(2+) as a cofactor.

The enzyme catalyses adenosine(37) in tRNA + dimethylallyl diphosphate = N(6)-dimethylallyladenosine(37) in tRNA + diphosphate. In terms of biological role, catalyzes the transfer of a dimethylallyl group onto the adenine at position 37 in tRNAs that read codons beginning with uridine, leading to the formation of N6-(dimethylallyl)adenosine (i(6)A). The sequence is that of tRNA dimethylallyltransferase from Glaesserella parasuis serovar 5 (strain SH0165) (Haemophilus parasuis).